Consider the following 255-residue polypeptide: MKVKVFNLEGEPVEEIELPKVFSTPFRPDLIRRAVIASWTHRIQPQGRDPLAGKRRVTENIGKGHGMARVERIKTPPRFAAFVPFARGGRRTHPPKVEKIIWEDINKKERRLAIMSAIAATANPDLVRARGHVVDNVPAFPLVVVDDLQKVFKTAQTREIFKKLGIWDDIERAKRNTKIRAGKGKMRGRRYKKAKGPLIVVAKNEGIVQGARNHPGVDVVTVDNLGVELLAPGTHPGRLTIWTKGAIERLKEIYG.

It belongs to the universal ribosomal protein uL4 family. Part of the 50S ribosomal subunit.

Its function is as follows. One of the primary rRNA binding proteins, this protein initially binds near the 5'-end of the 23S rRNA. It is important during the early stages of 50S assembly. It makes multiple contacts with different domains of the 23S rRNA in the assembled 50S subunit and ribosome. Forms part of the polypeptide exit tunnel. The sequence is that of Large ribosomal subunit protein uL4 from Thermococcus gammatolerans (strain DSM 15229 / JCM 11827 / EJ3).